The sequence spans 442 residues: D-serine dehydratase (442 aa).

Lysine 118 is subject to N6-(pyridoxal phosphate)lysine.

The protein belongs to the serine/threonine dehydratase family. DsdA subfamily. As to quaternary structure, monomer. Pyridoxal 5'-phosphate is required as a cofactor.

It catalyses the reaction D-serine = pyruvate + NH4(+). In Escherichia coli O81 (strain ED1a), this protein is D-serine dehydratase.